Reading from the N-terminus, the 412-residue chain is DNA utilization protein HofQ (412 aa).

The signal sequence occupies residues 1–18 (MKQWIAALLLMLIPGVQA).

Belongs to the bacterial secretin family. PilQ subfamily.

The protein resides in the cell outer membrane. Its function is as follows. Required for the use of extracellular DNA as a nutrient. Could be the porin responsible for transport of DNA across the outer membrane. The sequence is that of DNA utilization protein HofQ (hofQ) from Escherichia coli (strain K12).